Consider the following 646-residue polypeptide: Beta-galactosidase-1-like protein (646 aa).

An N-terminal signal peptide occupies residues 1 to 23 (MPPDLPSLLLRLVVLLLLSQAEA). The N-linked (GlcNAc...) asparagine glycan is linked to asparagine 93. Residue glutamate 182 is the Proton donor of the active site. A glycan (N-linked (GlcNAc...) asparagine) is linked at asparagine 239. The active-site Nucleophile is the glutamate 260.

It belongs to the glycosyl hydrolase 35 family.

Its subcellular location is the secreted. Its function is as follows. Probable glycosyl hydrolase. The sequence is that of Beta-galactosidase-1-like protein (Glb1l) from Mus musculus (Mouse).